A 214-amino-acid chain; its full sequence is Ribonuclease P protein component 3 (214 aa).

This sequence belongs to the eukaryotic/archaeal RNase P protein component 3 family. As to quaternary structure, consists of a catalytic RNA component and at least 4-5 protein subunits. Forms a subcomplex with Rnp2 which stimulates the catalytic RNA.

The protein resides in the cytoplasm. The catalysed reaction is Endonucleolytic cleavage of RNA, removing 5'-extranucleotides from tRNA precursor.. In terms of biological role, part of ribonuclease P, a protein complex that generates mature tRNA molecules by cleaving their 5'-ends. The RNA is catalytic, but its KM for pre-tRNA is 170-fold decreased in the presence of the 4 known protein subunits (Rnp1-4). The protein subunits also decrease the amount of Mg(2+) needed for activity. The polypeptide is Ribonuclease P protein component 3 (Pyrococcus furiosus (strain ATCC 43587 / DSM 3638 / JCM 8422 / Vc1)).